A 224-amino-acid polypeptide reads, in one-letter code: (S)-2-haloacid dehalogenase H-109 (224 aa).

Asp-10 functions as the Nucleophile in the catalytic mechanism. An (S)-2-haloacid contacts are provided by residues Leu-11 to Tyr-12, Arg-41, and Ser-118 to Asn-119. Residues Ser-175–Asp-180 are important for catalytic activity.

Belongs to the HAD-like hydrolase superfamily. S-2-haloalkanoic acid dehalogenase family.

It carries out the reaction an (S)-2-haloacid + H2O = a (2R)-2-hydroxycarboxylate + a halide anion + H(+). The catalysed reaction is (S)-2-chloropropanoate + H2O = (R)-lactate + chloride + H(+). Functionally, catalyzes the hydrolytic dehalogenation of small (S)-2-haloalkanoic acids to yield the corresponding (R)-2-hydroxyalkanoic acids. Acts on acids of short chain lengths, C(2) to C(4), with inversion of configuration at C-2. Active with 2-halogenated carboxylic acids and converts only the S-isomer (or L-isomer) of 2-chloropropionic acid with inversion of configuration to produce R-lactate (or D-isomer). This is (S)-2-haloacid dehalogenase H-109 from Pseudomonas putida (Arthrobacter siderocapsulatus).